The chain runs to 179 residues: Adenine phosphoribosyltransferase (179 aa).

Belongs to the purine/pyrimidine phosphoribosyltransferase family. As to quaternary structure, homodimer.

It localises to the cytoplasm. It carries out the reaction AMP + diphosphate = 5-phospho-alpha-D-ribose 1-diphosphate + adenine. The protein operates within purine metabolism; AMP biosynthesis via salvage pathway; AMP from adenine: step 1/1. Its function is as follows. Catalyzes a salvage reaction resulting in the formation of AMP, that is energically less costly than de novo synthesis. This Histophilus somni (strain 129Pt) (Haemophilus somnus) protein is Adenine phosphoribosyltransferase.